The following is a 309-amino-acid chain: Probable nitrogen assimilation transcriptional activator (309 aa).

An HTH lysR-type domain is found at 1–57 (MRLEQLQAFLKVAELGSFQQAALQSEVTQSTISRQIQGLESALKCQLFHRGAQAKLT). Residues 18 to 38 (FQQAALQSEVTQSTISRQIQG) constitute a DNA-binding region (H-T-H motif).

Belongs to the LysR transcriptional regulatory family.

Its function is as follows. Seems to regulate utilization of fixed nitrogen by controlling the expression of a certain gene(s) involved in nitrogen metabolism. The protein is Probable nitrogen assimilation transcriptional activator (ntcB) of Synechocystis sp. (strain ATCC 27184 / PCC 6803 / Kazusa).